We begin with the raw amino-acid sequence, 250 residues long: 1-(5-phosphoribosyl)-5-[(5-phosphoribosylamino)methylideneamino] imidazole-4-carboxamide isomerase (250 aa).

The active-site Proton acceptor is the Asp7. The Proton donor role is filled by Asp129.

It belongs to the HisA/HisF family.

It localises to the cytoplasm. It carries out the reaction 1-(5-phospho-beta-D-ribosyl)-5-[(5-phospho-beta-D-ribosylamino)methylideneamino]imidazole-4-carboxamide = 5-[(5-phospho-1-deoxy-D-ribulos-1-ylimino)methylamino]-1-(5-phospho-beta-D-ribosyl)imidazole-4-carboxamide. It functions in the pathway amino-acid biosynthesis; L-histidine biosynthesis; L-histidine from 5-phospho-alpha-D-ribose 1-diphosphate: step 4/9. The polypeptide is 1-(5-phosphoribosyl)-5-[(5-phosphoribosylamino)methylideneamino] imidazole-4-carboxamide isomerase (Shewanella denitrificans (strain OS217 / ATCC BAA-1090 / DSM 15013)).